Reading from the N-terminus, the 222-residue chain is DnaJ homolog subfamily B member 9 (222 aa).

The first 23 residues, 1–23, serve as a signal peptide directing secretion; sequence MATPQSVFVFAICILMITELILA. Positions 26 to 90 constitute a J domain; that stretch reads SYYDILGVPK…HRRKEYDTVG (65 aa). The divergent targeting domain stretch occupies residues 91 to 222; it reads HTAFTNGKGQ…VTTYTDCSGQ (132 aa). Phosphoserine is present on Ser-133.

As to quaternary structure, interacts with HSPA5/BiP; interaction is direct. Interacts with ERN1/IRE1 (via the luminal region). Interacts with DERL1.

The protein localises to the endoplasmic reticulum lumen. In terms of biological role, co-chaperone for Hsp70 protein HSPA5/BiP that acts as a key repressor of the ERN1/IRE1-mediated unfolded protein response (UPR). J domain-containing co-chaperones stimulate the ATPase activity of Hsp70 proteins and are required for efficient substrate recognition by Hsp70 proteins. In the unstressed endoplasmic reticulum, interacts with the luminal region of ERN1/IRE1 and selectively recruits HSPA5/BiP: HSPA5/BiP disrupts the dimerization of the active ERN1/IRE1 luminal region, thereby inactivating ERN1/IRE1. Also involved in endoplasmic reticulum-associated degradation (ERAD) of misfolded proteins. Required for survival of B-cell progenitors and normal antibody production. The chain is DnaJ homolog subfamily B member 9 from Cricetulus griseus (Chinese hamster).